We begin with the raw amino-acid sequence, 493 residues long: Arginine decarboxylase (493 aa).

N6-(pyridoxal phosphate)lysine is present on Lys-229.

Belongs to the Orn/Lys/Arg decarboxylase class-I family. Pyridoxal 5'-phosphate serves as cofactor.

It is found in the cytoplasm. It catalyses the reaction L-arginine + H(+) = agmatine + CO2. The protein operates within amine and polyamine biosynthesis; agmatine biosynthesis; agmatine from L-arginine: step 1/1. Its function is as follows. Catalyzes the formation of agmatine from arginine. This is Arginine decarboxylase (speA) from Bacillus anthracis.